Consider the following 421-residue polypeptide: UDP-N-acetylglucosamine 1-carboxyvinyltransferase (421 aa).

A phosphoenolpyruvate-binding site is contributed by 22–23 (KN). R93 lines the UDP-N-acetyl-alpha-D-glucosamine pocket. C117 (proton donor) is an active-site residue. C117 carries the 2-(S-cysteinyl)pyruvic acid O-phosphothioketal modification. Residues 122–126 (RPVDL), D308, and I330 contribute to the UDP-N-acetyl-alpha-D-glucosamine site.

Belongs to the EPSP synthase family. MurA subfamily.

The protein localises to the cytoplasm. The enzyme catalyses phosphoenolpyruvate + UDP-N-acetyl-alpha-D-glucosamine = UDP-N-acetyl-3-O-(1-carboxyvinyl)-alpha-D-glucosamine + phosphate. It participates in cell wall biogenesis; peptidoglycan biosynthesis. Cell wall formation. Adds enolpyruvyl to UDP-N-acetylglucosamine. The sequence is that of UDP-N-acetylglucosamine 1-carboxyvinyltransferase from Pseudomonas fluorescens (strain Pf0-1).